Reading from the N-terminus, the 152-residue chain is Transcriptional repressor NrdR (152 aa).

Residues 3–34 fold into a zinc finger; it reads CPYCNASETKVIDSRLAAEGAQVRRRRSCNSC. The 91-residue stretch at 49-139 folds into the ATP-cone domain; sequence PRIIKSSGKI…VYRDFQDIDA (91 aa).

It belongs to the NrdR family. The cofactor is Zn(2+).

In terms of biological role, negatively regulates transcription of bacterial ribonucleotide reductase nrd genes and operons by binding to NrdR-boxes. The sequence is that of Transcriptional repressor NrdR from Psychrobacter cryohalolentis (strain ATCC BAA-1226 / DSM 17306 / VKM B-2378 / K5).